An 82-amino-acid chain; its full sequence is Small ribosomal subunit protein bS16 (82 aa).

Belongs to the bacterial ribosomal protein bS16 family.

In Crocosphaera subtropica (strain ATCC 51142 / BH68) (Cyanothece sp. (strain ATCC 51142)), this protein is Small ribosomal subunit protein bS16.